A 279-amino-acid polypeptide reads, in one-letter code: Urease accessory protein UreD (279 aa).

It belongs to the UreD family. As to quaternary structure, ureD, UreF and UreG form a complex that acts as a GTP-hydrolysis-dependent molecular chaperone, activating the urease apoprotein by helping to assemble the nickel containing metallocenter of UreC. The UreE protein probably delivers the nickel.

It localises to the cytoplasm. Required for maturation of urease via the functional incorporation of the urease nickel metallocenter. The protein is Urease accessory protein UreD of Trichormus variabilis (strain ATCC 29413 / PCC 7937) (Anabaena variabilis).